The sequence spans 341 residues: ATP synthase subunit a 2 (341 aa).

Positions 1-33 (MKRVKVIQIKGFFRVMALLAPLLLNAYLPVQAS) are cleaved as a signal peptide. 6 helical membrane-spanning segments follow: residues 112–132 (VVML…VGAA), 173–193 (LPYL…GLIP), 195–215 (GATA…TFFI), 242–262 (WIIM…ALTV), 273–293 (IVIL…VAAA), and 307–327 (IFVA…FIGL).

It belongs to the ATPase A chain family. In terms of assembly, F-type ATPases have 2 components, CF(1) - the catalytic core - and CF(0) - the membrane proton channel. CF(1) has five subunits: alpha(3), beta(3), gamma(1), delta(1), epsilon(1). CF(0) has four main subunits: a, b, b' and c.

Its subcellular location is the cell inner membrane. In terms of biological role, key component of the proton channel; it plays a direct role in the translocation of protons across the membrane. This Chlorobium luteolum (strain DSM 273 / BCRC 81028 / 2530) (Pelodictyon luteolum) protein is ATP synthase subunit a 2.